Here is a 396-residue protein sequence, read N- to C-terminus: Purple acid phosphatase 5 (396 aa).

The first 13 residues, 1–13, serve as a signal peptide directing secretion; that stretch reads MSLETFPPPAGYN. An N-linked (GlcNAc...) asparagine glycan is attached at asparagine 58. Position 125 (aspartate 125) interacts with Fe cation. Asparagine 133 carries an N-linked (GlcNAc...) asparagine glycan. The Fe cation site is built by aspartate 153 and tyrosine 156. Zn(2+) is bound at residue aspartate 153. Asparagine 190 serves as a coordination point for Zn(2+). Asparagine 190 contacts substrate. An N-linked (GlcNAc...) asparagine glycan is attached at asparagine 238. Zn(2+) is bound at residue histidine 250. Histidine 260 (proton donor) is an active-site residue. Histidine 287 contributes to the Zn(2+) binding site. 287–289 contacts substrate; that stretch reads HVH. Histidine 289 contacts Fe cation. 2 N-linked (GlcNAc...) asparagine glycosylation sites follow: asparagine 303 and asparagine 360.

This sequence belongs to the metallophosphoesterase superfamily. Purple acid phosphatase family. As to quaternary structure, homodimer. Fe cation is required as a cofactor. It depends on Zn(2+) as a cofactor.

The protein resides in the secreted. It catalyses the reaction a phosphate monoester + H2O = an alcohol + phosphate. The chain is Purple acid phosphatase 5 (PAP5) from Arabidopsis thaliana (Mouse-ear cress).